We begin with the raw amino-acid sequence, 437 residues long: UDP-sugar transporter protein SLC35A5 (437 aa).

Over 1-21 (MKVIFLRQLKTRGMERKCSRR) the chain is Cytoplasmic. The chain crosses the membrane as a helical span at residues 22 to 42 (PGLGPPTLYTFLLGIIFITLS). Residues 43–65 (SSRILLVKYSANEENKYDYLPTT) are Lumenal-facing. Residues 66–86 (VNVCSELMKLILCILVSLCVI) traverse the membrane as a helical segment. Over 87–106 (KKEDHQSRHLRCTSWKEFSS) the chain is Cytoplasmic. A helical transmembrane segment spans residues 107 to 129 (FMKWSIPAFLYFLDNLIVFYVLS). Topologically, residues 130–132 (YLQ) are lumenal. A helical transmembrane segment spans residues 133–155 (PAMAVIFSNFSIITTALLFRIVL). The Cytoplasmic portion of the chain corresponds to 156-158 (KRH). A helical membrane pass occupies residues 159-179 (LNWIQWASLLILFLSIVALTA). The Lumenal segment spans residues 180–241 (STKTSQHELA…TTARVFSHIR (62 aa)). An N-linked (GlcNAc...) asparagine glycan is attached at asparagine 217. Residues 242-262 (LGLGHVLIIVQCFISSMANIY) traverse the membrane as a helical segment. Topologically, residues 263–276 (NEKILKEGTQLTES) are cytoplasmic. The chain crosses the membrane as a helical span at residues 277–297 (IFIQNSKLYFFGIVFNGLTLV). Residues 298-316 (LQSSNRDQIQNCGFFYGHN) lie on the Lumenal side of the membrane. A helical membrane pass occupies residues 317–337 (AFSVVLIFVTAFQGLSVAFIL). Residues 338–343 (KFLDNM) are Cytoplasmic-facing. A helical membrane pass occupies residues 344 to 364 (FHVLMAQVTTVIITTVSVLVF). The Lumenal portion of the chain corresponds to 365–367 (DFR). The chain crosses the membrane as a helical span at residues 368 to 388 (PSLDFFLEAPSVLLSIFIYNA). Over 389-437 (SKPQNLECAPKQERIRHLSGSLWERSSGDGEELERLTKLKSDDSDDDTL) the chain is Cytoplasmic. Phosphoserine occurs at positions 407, 429, and 432. The tract at residues 412–437 (ERSSGDGEELERLTKLKSDDSDDDTL) is disordered. Over residues 421–430 (LERLTKLKSD) the composition is skewed to basic and acidic residues.

This sequence belongs to the nucleotide-sugar transporter family. SLC35A subfamily. As to quaternary structure, probably forms homooligomers and heterooligomers with SLC35A1, SLC35A2, SLC35A3 and SLC35A4.

The protein localises to the golgi apparatus membrane. The catalysed reaction is UMP(out) + UDP-alpha-D-glucuronate(in) = UMP(in) + UDP-alpha-D-glucuronate(out). The enzyme catalyses UMP(out) + UDP-N-acetyl-alpha-D-glucosamine(in) = UMP(in) + UDP-N-acetyl-alpha-D-glucosamine(out). It catalyses the reaction UDP-N-acetyl-alpha-D-galactosamine(in) + UMP(out) = UDP-N-acetyl-alpha-D-galactosamine(out) + UMP(in). Its function is as follows. Probable UDP-sugar:UMP transmembrane antiporter involved in UDP-alpha-D-glucuronate/UDP-GlcA, UDP-GlcNAc/UDP-N-acetyl-alpha-D-glucosamine and UDP-N-acetyl-alpha-D-galactosamine/UDP-GalNAc transport from the cytosol to the lumen of the Golgi. The protein is UDP-sugar transporter protein SLC35A5 of Mus musculus (Mouse).